The chain runs to 440 residues: Cell division protein DivIB (440 aa).

The segment covering 1–10 (MMDDKTKNDQ) has biased composition (basic and acidic residues). Disordered regions lie at residues 1-97 (MMDD…DSNI) and 123-154 (QHQS…TQLK). Residues 1-174 (MMDDKTKNDQ…RRKRQKRIQY (174 aa)) are Cytoplasmic-facing. The span at 12–21 (ESNEDKDELE) shows a compositional bias: acidic residues. The segment covering 27–39 (TSKKRRQRKRSKA) has biased composition (basic residues). Residues 78–87 (DSASSHANDN) show a composition bias toward low complexity. Residues 88-97 (NIDDSTDSNI) show a composition bias toward acidic residues. The segment covering 124–134 (HQSAPNEQNSD) has biased composition (polar residues). A helical transmembrane segment spans residues 175-195 (SVITILVLLIAVILIYMFSPL). A POTRA domain is found at 196–264 (SKIAHVNING…NTLNVDITEN (69 aa)). Residues 196–440 (SKIAHVNING…KINKQSSKNN (245 aa)) are Extracellular-facing. A disordered region spans residues 397–440 (YRGNTSTQSESDKNVTKSSQEENQAKEELQSVLNKINKQSSKNN). Positions 406 to 425 (ESDKNVTKSSQEENQAKEEL) are enriched in basic and acidic residues. Positions 427-440 (SVLNKINKQSSKNN) are enriched in polar residues.

This sequence belongs to the FtsQ/DivIB family. DivIB subfamily.

It localises to the cell membrane. Functionally, cell division protein that may be involved in stabilizing or promoting the assembly of the division complex. This is Cell division protein DivIB from Staphylococcus aureus (strain MRSA252).